The following is a 230-amino-acid chain: Uracil-DNA glycosylase (230 aa).

Aspartate 70 (proton acceptor) is an active-site residue.

It belongs to the uracil-DNA glycosylase (UDG) superfamily. UNG family.

The protein localises to the cytoplasm. It catalyses the reaction Hydrolyzes single-stranded DNA or mismatched double-stranded DNA and polynucleotides, releasing free uracil.. Its function is as follows. Excises uracil residues from the DNA which can arise as a result of misincorporation of dUMP residues by DNA polymerase or due to deamination of cytosine. This is Uracil-DNA glycosylase from Pseudomonas fluorescens (strain SBW25).